We begin with the raw amino-acid sequence, 110 residues long: UPF0060 membrane protein SACE_5620 (110 aa).

4 helical membrane passes run 8-28 (VVLF…VWQG), 34-54 (GLLW…VATF), 63-83 (ILAA…VVVD), and 89-109 (RWDL…MYAP).

This sequence belongs to the UPF0060 family.

The protein resides in the cell membrane. This Saccharopolyspora erythraea (strain ATCC 11635 / DSM 40517 / JCM 4748 / NBRC 13426 / NCIMB 8594 / NRRL 2338) protein is UPF0060 membrane protein SACE_5620.